We begin with the raw amino-acid sequence, 208 residues long: Putative 3-methyladenine DNA glycosylase (208 aa).

It belongs to the DNA glycosylase MPG family.

This is Putative 3-methyladenine DNA glycosylase from Lactobacillus delbrueckii subsp. bulgaricus (strain ATCC 11842 / DSM 20081 / BCRC 10696 / JCM 1002 / NBRC 13953 / NCIMB 11778 / NCTC 12712 / WDCM 00102 / Lb 14).